A 51-amino-acid polypeptide reads, in one-letter code: Lipid-anchored plasma membrane protein CPP3 (51 aa).

Positions 1 to 28 are disordered; the sequence is MRHHQNMHYAPQQQPVYVQQPPPRRESG.

This sequence belongs to the CYSTM1 family. Palmitoylated near the C-terminus.

Its subcellular location is the cell membrane. The protein is Lipid-anchored plasma membrane protein CPP3 of Saccharomyces cerevisiae (strain ATCC 204508 / S288c) (Baker's yeast).